The sequence spans 507 residues: TOM1-like protein 2 (507 aa).

Positions 20–152 (ATDGSLQSED…ELKRRGIEFP (133 aa)) constitute a VHS domain. Ser-160 bears the Phosphoserine mark. Thr-164 carries the phosphothreonine modification. Positions 164–200 (TPQRSVPEMDPAATIPRSQTQPRTTAGTYSSPPPASY) are disordered. The GAT domain maps to 219–307 (EQIARLRSEL…VFLRYERFER (89 aa)). Positions 329 to 334 (NLIDLG) match the Clathrin-binding motif. The segment at 466–507 (ERAKAAETVPDLPSPPTEAPAPASNTSTRKKPERSDDALFAL) is disordered. Residues 498 to 507 (ERSDDALFAL) are compositionally biased toward basic and acidic residues.

The protein belongs to the TOM1 family. In terms of assembly, interacts with clathrin, SRC and TOLLIP. Interacts with MYO6. Ubiquitously expressed. Splicing pattern displays tissue specific variation.

Functionally, acts as a MYO6/Myosin VI adapter protein that targets myosin VI to endocytic structures. May also play a role in recruiting clathrin to endosomes. May regulate growth factor-induced mitogenic signaling. In Mus musculus (Mouse), this protein is TOM1-like protein 2 (Tom1l2).